A 335-amino-acid polypeptide reads, in one-letter code: Glyceraldehyde-3-phosphate dehydrogenase 2 (335 aa).

Residues 13–14 and glycine 111 each bind NAD(+); that span reads TI. 140 to 142 lines the D-glyceraldehyde 3-phosphate pocket; it reads SCN. The active-site Nucleophile is cysteine 141. Residue arginine 169 coordinates NAD(+). D-glyceraldehyde 3-phosphate is bound by residues threonine 171 and 195–196; that span reads HG. Position 300 (glutamine 300) interacts with NAD(+).

Belongs to the glyceraldehyde-3-phosphate dehydrogenase family. As to quaternary structure, homotetramer.

It is found in the cytoplasm. The catalysed reaction is D-glyceraldehyde 3-phosphate + phosphate + NADP(+) = (2R)-3-phospho-glyceroyl phosphate + NADPH + H(+). It carries out the reaction D-glyceraldehyde 3-phosphate + phosphate + NAD(+) = (2R)-3-phospho-glyceroyl phosphate + NADH + H(+). It participates in carbohydrate degradation; glycolysis; pyruvate from D-glyceraldehyde 3-phosphate: step 1/5. In Methanosarcina acetivorans (strain ATCC 35395 / DSM 2834 / JCM 12185 / C2A), this protein is Glyceraldehyde-3-phosphate dehydrogenase 2 (gapB).